The chain runs to 315 residues: Ester hydrolase C11orf54 (315 aa).

Zn(2+) contacts are provided by histidine 266, histidine 268, and histidine 278.

In terms of assembly, monomer. The cofactor is Zn(2+).

The protein resides in the nucleus. It localises to the cytoplasm. In terms of biological role, exhibits ester hydrolase activity on the substrate p-nitrophenyl acetate, in vitro. Regulates DNA damage and repair by regulating HIF1A degradation via chaperone-mediated autophagy (CMA). Functionally, probably non-functional. This is Ester hydrolase C11orf54 (C11orf54) from Homo sapiens (Human).